The following is a 1867-amino-acid chain: TATA-binding protein-associated factor MOT1 (1867 aa).

Residue serine 93 is modified to Phosphoserine. The tract at residues 169–228 (KTDDIKQETSMLNASDKANENKSNANKKSARMLAMARRKKKMSAKNTPKHPVDITESSVS) is disordered. The span at 181–203 (NASDKANENKSNANKKSARMLAM) shows a compositional bias: low complexity. The Nuclear localization signal signature appears at 195-211 (KKSARMLAMARRKKKMS). HEAT repeat units lie at residues 289–326 (WQFQ…KHAY), 445–482 (GLLE…EFVK), and 541–578 (WSFK…IKDD). The residue at position 677 (serine 677) is a Phosphoserine. HEAT repeat units lie at residues 1108-1145 (SEVF…ISSV) and 1188-1225 (PYVI…LVPL). The Helicase ATP-binding domain maps to 1284 to 1457 (AFLNKYHLHG…WSLFDFLMPG (174 aa)). 1297-1304 (DDMGLGKT) is an ATP binding site. The DEGH box motif lies at 1408-1411 (DEGH). One copy of the HEAT 6 repeat lies at 1495–1537 (ALHKQVLPFMLRRLKEDVLSDLPPKIIQDYYCELGDLQKQLYM). One can recognise a Helicase C-terminal domain in the interval 1639-1787 (PIQNVISQHR…STVVNQQNSG (149 aa)). The interval 1802–1822 (PDNVTSQDNEEKNNGDSQAAK) is disordered.

The protein belongs to the SNF2/RAD54 helicase family. Forms a complex with TBP which binds TATA DNA with high affinity but with altered specificity.

The protein localises to the mitochondrion. It localises to the nucleus. Its function is as follows. Regulates transcription in association with TATA binding protein (TBP). Removes TBP from the TATA box via its C-terminal ATPase activity. Both transcription activation and repression require its ATPase activity. The protein is TATA-binding protein-associated factor MOT1 (MOT1) of Saccharomyces cerevisiae (strain ATCC 204508 / S288c) (Baker's yeast).